We begin with the raw amino-acid sequence, 184 residues long: UPF0398 protein OB1025 (184 aa).

This sequence belongs to the UPF0398 family.

The polypeptide is UPF0398 protein OB1025 (Oceanobacillus iheyensis (strain DSM 14371 / CIP 107618 / JCM 11309 / KCTC 3954 / HTE831)).